We begin with the raw amino-acid sequence, 270 residues long: 5'-AMP-activated protein kinase subunit beta-1 (270 aa).

The disordered stretch occupies residues 1-43 (MGNTSSERAALERQAGHKTPRRDSSGGTKDGDRPKILMDSPED). Glycine 2 is lipidated: N-myristoyl glycine. Threonine 4 is modified (phosphothreonine). Residues serine 5 and serine 6 each carry the phosphoserine modification. The span at 9 to 36 (AALERQAGHKTPRRDSSGGTKDGDRPKI) shows a compositional bias: basic and acidic residues. Threonine 19 is modified (phosphothreonine). A phosphoserine; by autocatalysis mark is found at serine 24 and serine 25. 3 positions are modified to phosphoserine: serine 40, serine 96, and serine 101. The interval 68–163 (EVNEKAPAQA…QVKKTDFEVF (96 aa)) is glycogen-binding domain. Serine 108 carries the post-translational modification Phosphoserine; by autocatalysis. The residue at position 148 (threonine 148) is a Phosphothreonine. Serine 182 carries the post-translational modification Phosphoserine. Position 201 is an N6-succinyllysine (lysine 201).

Belongs to the 5'-AMP-activated protein kinase beta subunit family. AMPK is a heterotrimer of an alpha catalytic subunit (PRKAA1 or PRKAA2), a beta (PRKAB1 or PRKAB2) and a gamma non-catalytic subunits (PRKAG1, PRKAG2 or PRKAG3). Interacts with FNIP1 and FNIP2. Phosphorylated when associated with the catalytic subunit (PRKAA1 or PRKAA2). Phosphorylated by ULK1; leading to negatively regulate AMPK activity and suggesting the existence of a regulatory feedback loop between ULK1 and AMPK. In terms of tissue distribution, highly expressed in kidney, heart, white adipose tissue, lung and spleen.

Functionally, non-catalytic subunit of AMP-activated protein kinase (AMPK), an energy sensor protein kinase that plays a key role in regulating cellular energy metabolism. In response to reduction of intracellular ATP levels, AMPK activates energy-producing pathways and inhibits energy-consuming processes: inhibits protein, carbohydrate and lipid biosynthesis, as well as cell growth and proliferation. AMPK acts via direct phosphorylation of metabolic enzymes, and by longer-term effects via phosphorylation of transcription regulators. Also acts as a regulator of cellular polarity by remodeling the actin cytoskeleton; probably by indirectly activating myosin. Beta non-catalytic subunit acts as a scaffold on which the AMPK complex assembles, via its C-terminus that bridges alpha (PRKAA1 or PRKAA2) and gamma subunits (PRKAG1, PRKAG2 or PRKAG3). This is 5'-AMP-activated protein kinase subunit beta-1 (Prkab1) from Rattus norvegicus (Rat).